The chain runs to 272 residues: Dermonecrotic toxin LvSicTox-alphaIC1bii (272 aa).

The active site involves His5. Mg(2+) is bound by residues Glu25 and Asp27. The active-site Nucleophile is His41. Intrachain disulfides connect Cys45–Cys51 and Cys47–Cys189. Asp84 serves as a coordination point for Mg(2+).

It belongs to the arthropod phospholipase D family. Class II subfamily. Requires Mg(2+) as cofactor. In terms of tissue distribution, expressed by the venom gland.

It is found in the secreted. The catalysed reaction is an N-(acyl)-sphingosylphosphocholine = an N-(acyl)-sphingosyl-1,3-cyclic phosphate + choline. It carries out the reaction an N-(acyl)-sphingosylphosphoethanolamine = an N-(acyl)-sphingosyl-1,3-cyclic phosphate + ethanolamine. It catalyses the reaction a 1-acyl-sn-glycero-3-phosphocholine = a 1-acyl-sn-glycero-2,3-cyclic phosphate + choline. The enzyme catalyses a 1-acyl-sn-glycero-3-phosphoethanolamine = a 1-acyl-sn-glycero-2,3-cyclic phosphate + ethanolamine. Its function is as follows. Dermonecrotic toxins cleave the phosphodiester linkage between the phosphate and headgroup of certain phospholipids (sphingolipid and lysolipid substrates), forming an alcohol (often choline) and a cyclic phosphate. This toxin acts on sphingomyelin (SM). It may also act on ceramide phosphoethanolamine (CPE), lysophosphatidylcholine (LPC) and lysophosphatidylethanolamine (LPE), but not on lysophosphatidylserine (LPS), and lysophosphatidylglycerol (LPG). It acts by transphosphatidylation, releasing exclusively cyclic phosphate products as second products. Induces dermonecrosis, hemolysis, increased vascular permeability, edema, inflammatory response, and platelet aggregation. The polypeptide is Dermonecrotic toxin LvSicTox-alphaIC1bii (Loxosceles variegata (Recluse spider)).